The following is a 373-amino-acid chain: Filamin-binding LIM protein 1 (373 aa).

Residues 1–70 (MASKPEKRVA…SPWTTPGRAA (70 aa)) are filamin-binding. 2 disordered regions span residues 41 to 119 (RPWE…PSEE) and 135 to 176 (QLHL…PVEK). Over residues 104–114 (LPPPPPPPPVL) the composition is skewed to pro residues. 3 LIM zinc-binding domains span residues 181–242 (DICA…TLER), 243–300 (CGKC…RKFA), and 301–370 (PVCS…RSAA). The tract at residues 276–373 (IGDESFALGS…HVKRSAAGCC (98 aa)) is FERMT2-binding.

Interacts with NKX2-5. Isoform 1 and isoform 3 interact with FERMT2, FLNA, FLNB and FLNC. Isoform 2 interacts with FLNB. Isoform 1 and isoform 3 are expressed in heart, kidney, lung, pancreas, placenta and platelets. Isoform 2 is expressed in brain, heart, kidney, lung, pancreas, placenta, skeletal muscle and platelets.

The protein localises to the cell junction. It is found in the focal adhesion. Its subcellular location is the cytoplasm. It localises to the cytoskeleton. The protein resides in the stress fiber. Its function is as follows. Serves as an anchoring site for cell-ECM adhesion proteins and filamin-containing actin filaments. Is implicated in cell shape modulation (spreading) and motility. May participate in the regulation of filamin-mediated cross-linking and stabilization of actin filaments. May also regulate the assembly of filamin-containing signaling complexes that control actin assembly. Promotes dissociation of FLNA from ITGB3 and ITGB7. Promotes activation of integrins and regulates integrin-mediated cell-cell adhesion. This chain is Filamin-binding LIM protein 1 (FBLIM1), found in Homo sapiens (Human).